Consider the following 288-residue polypeptide: Cyclic UMP-AMP synthase (288 aa).

Residues 1-23 (MPVPESQLERWSHQGATTTAKKT) are disordered. UTP is bound at residue Gln-46. Residue 46–48 (QGS) coordinates ATP. The Mg(2+) site is built by Asp-60 and Asp-62. Residues Asp-62 and 116 to 120 (RKTLK) contribute to the UTP site. Residue Asp-129 coordinates Mg(2+). A UTP-binding site is contributed by Asn-166. ATP-binding residues include Lys-194, Ser-212, and Glu-265.

It belongs to the CD-NTase family. E01 subfamily. Requires Mg(2+) as cofactor.

The catalysed reaction is UTP + ATP = 3',3'-cUAMP + 2 diphosphate. Its function is as follows. Cyclic nucleotide synthase (second messenger synthase) of a CBASS antivirus system. CBASS (cyclic oligonucleotide-based antiphage signaling system) provides immunity against bacteriophage. The CD-NTase protein synthesizes cyclic nucleotides in response to infection; these serve as specific second messenger signals. The signals activate a diverse range of effectors, leading to bacterial cell death and thus abortive phage infection. A type I-B(UU) CBASS system. In terms of biological role, cyclic dinucleotide synthase that catalyzes the synthesis of 3'3'-cyclic UMP-AMP (cUMP-AMP) from UTP and ATP, a second messenger for cell signal transduction. This is Cyclic UMP-AMP synthase from Rhodothermus marinus (strain SG0.5JP17-172).